The sequence spans 549 residues: Glucose-6-phosphate isomerase (549 aa).

N6-acetyllysine occurs at positions 80, 228, and 234. Glu355 (proton donor) is an active-site residue. Residues His386 and Lys514 contribute to the active site.

The protein belongs to the GPI family.

It localises to the cytoplasm. It catalyses the reaction alpha-D-glucose 6-phosphate = beta-D-fructose 6-phosphate. It participates in carbohydrate biosynthesis; gluconeogenesis. The protein operates within carbohydrate degradation; glycolysis; D-glyceraldehyde 3-phosphate and glycerone phosphate from D-glucose: step 2/4. Functionally, catalyzes the reversible isomerization of glucose-6-phosphate to fructose-6-phosphate. This chain is Glucose-6-phosphate isomerase, found in Escherichia coli (strain SE11).